The sequence spans 341 residues: HTH-type transcriptional repressor PurR (341 aa).

An HTH lacI-type domain is found at 2–56; it reads ATIKDVAKRANVSTTTVSHVINKTRFVAEETRNAVWAAIKELHYSPSAVARSLKV. Positions 4-23 form a DNA-binding region, H-T-H motif; that stretch reads IKDVAKRANVSTTTVSHVIN. A DNA-binding region spans residues 48–56; the sequence is SAVARSLKV. Tyrosine 73, arginine 190, threonine 192, phenylalanine 221, and aspartate 275 together coordinate hypoxanthine.

As to quaternary structure, homodimer.

The protein operates within purine metabolism; purine nucleotide biosynthesis [regulation]. Its function is as follows. Is the main repressor of the genes involved in the de novo synthesis of purine nucleotides, regulating purB, purC, purEK, purF, purHD, purL, purMN and guaBA expression. PurR is allosterically activated to bind its cognate DNA by binding the purine corepressors, hypoxanthine or guanine, thereby effecting transcription repression. This is HTH-type transcriptional repressor PurR from Shigella dysenteriae serotype 1 (strain Sd197).